Consider the following 244-residue polypeptide: Uridylate kinase (244 aa).

ATP is bound at residue 15–18; sequence KLSG. Residues 23-28 are involved in allosteric activation by GTP; it reads GSEGFG. A UMP-binding site is contributed by G57. ATP contacts are provided by G58 and R62. Residues D77 and 138 to 145 each bind UMP; that span reads TGNPFFTT. 3 residues coordinate ATP: T165, F171, and D174.

This sequence belongs to the UMP kinase family. As to quaternary structure, homohexamer.

It localises to the cytoplasm. The enzyme catalyses UMP + ATP = UDP + ADP. The protein operates within pyrimidine metabolism; CTP biosynthesis via de novo pathway; UDP from UMP (UMPK route): step 1/1. With respect to regulation, allosterically activated by GTP. Inhibited by UTP. Its function is as follows. Catalyzes the reversible phosphorylation of UMP to UDP. The sequence is that of Uridylate kinase from Aeromonas salmonicida (strain A449).